A 217-amino-acid chain; its full sequence is Uridine kinase (217 aa).

Residue 17-24 participates in ATP binding; it reads GASASGKS.

Belongs to the uridine kinase family.

The protein resides in the cytoplasm. It carries out the reaction uridine + ATP = UMP + ADP + H(+). It catalyses the reaction cytidine + ATP = CMP + ADP + H(+). Its pathway is pyrimidine metabolism; CTP biosynthesis via salvage pathway; CTP from cytidine: step 1/3. It participates in pyrimidine metabolism; UMP biosynthesis via salvage pathway; UMP from uridine: step 1/1. The protein is Uridine kinase of Haemophilus ducreyi (strain 35000HP / ATCC 700724).